The chain runs to 207 residues: MKEIKLIVGLANPIKKYNDTRHNVGSWLVNSLVTQQNKKLKKNNKFLGYSTEINILSKNIHVLVPDTFMNLSGISVLAISNFYNIKLHEILVVHDELDLKPGNVKFRLRSSHNGHNGIRNVLAVLGTNIKFLRIQIGIGRPINSGYKISKFVLSKPNVSEKLLINRAILCAIRVIYDSINQRNVIMTESSLNSMLDHYMNSCVIHHN.

Tyrosine 17 provides a ligand contact to tRNA. Histidine 22 (proton acceptor) is an active-site residue. Residues phenylalanine 68, asparagine 70, and asparagine 116 each coordinate tRNA.

Belongs to the PTH family. As to quaternary structure, monomer.

It is found in the cytoplasm. The enzyme catalyses an N-acyl-L-alpha-aminoacyl-tRNA + H2O = an N-acyl-L-amino acid + a tRNA + H(+). Its function is as follows. Hydrolyzes ribosome-free peptidyl-tRNAs (with 1 or more amino acids incorporated), which drop off the ribosome during protein synthesis, or as a result of ribosome stalling. In terms of biological role, catalyzes the release of premature peptidyl moieties from peptidyl-tRNA molecules trapped in stalled 50S ribosomal subunits, and thus maintains levels of free tRNAs and 50S ribosomes. This chain is Peptidyl-tRNA hydrolase, found in Buchnera aphidicola subsp. Baizongia pistaciae (strain Bp).